Here is a 640-residue protein sequence, read N- to C-terminus: Threonine--tRNA ligase (640 aa).

A TGS domain is found at 1-63 (MSSVTVTLPD…SEDCEIEIVT (63 aa)). The catalytic stretch occupies residues 242–533 (DHRKLGREMD…LIEHYNGRFP (292 aa)). Residues Cys334, His385, and His510 each contribute to the Zn(2+) site.

The protein belongs to the class-II aminoacyl-tRNA synthetase family. In terms of assembly, homodimer. Requires Zn(2+) as cofactor.

Its subcellular location is the cytoplasm. The catalysed reaction is tRNA(Thr) + L-threonine + ATP = L-threonyl-tRNA(Thr) + AMP + diphosphate + H(+). Its function is as follows. Catalyzes the attachment of threonine to tRNA(Thr) in a two-step reaction: L-threonine is first activated by ATP to form Thr-AMP and then transferred to the acceptor end of tRNA(Thr). This Halobacterium salinarum (strain ATCC 29341 / DSM 671 / R1) protein is Threonine--tRNA ligase.